A 127-amino-acid chain; its full sequence is Ribosome-binding factor A (127 aa).

The protein belongs to the RbfA family. In terms of assembly, monomer. Binds 30S ribosomal subunits, but not 50S ribosomal subunits or 70S ribosomes.

The protein localises to the cytoplasm. Functionally, one of several proteins that assist in the late maturation steps of the functional core of the 30S ribosomal subunit. Associates with free 30S ribosomal subunits (but not with 30S subunits that are part of 70S ribosomes or polysomes). Required for efficient processing of 16S rRNA. May interact with the 5'-terminal helix region of 16S rRNA. This is Ribosome-binding factor A from Chloroflexus aurantiacus (strain ATCC 29366 / DSM 635 / J-10-fl).